Reading from the N-terminus, the 287-residue chain is Beta-lactamase GES-5 (287 aa).

The signal sequence occupies residues 1–18 (MRFIHALLLAGIAHSAYA). The cysteines at positions 63 and 233 are disulfide-linked. Residue Ser64 is the Nucleophile; acyl-ester intermediate of the active site. Imipenem is bound by residues Ser64, Ser125, Asn127, Thr230, Thr232, and Arg238.

Belongs to the class-A beta-lactamase family.

Its subcellular location is the secreted. The catalysed reaction is a beta-lactam + H2O = a substituted beta-amino acid. Its activity is regulated as follows. Inhibited by the beta-lactamase-blocking agents clavulanic acid, sulbactam and tazobactam, via a covalent binding to Ser-64. Functionally, confers resistance to penicillins, cephalosporins and carbapenems. Has carbapenem-hydrolyzing activity. The sequence is that of Beta-lactamase GES-5 from Klebsiella pneumoniae.